The sequence spans 334 residues: Glycerol-3-phosphate dehydrogenase [NAD(P)+] (334 aa).

3 residues coordinate NADPH: Trp13, Arg33, and Lys106. Sn-glycerol 3-phosphate is bound by residues Lys106, Gly137, and Ser139. Residue Ala141 coordinates NADPH. Sn-glycerol 3-phosphate contacts are provided by Lys192, Asp245, Ser255, Arg256, and Asn257. Lys192 serves as the catalytic Proton acceptor. Arg256 provides a ligand contact to NADPH. Positions 280 and 282 each coordinate NADPH.

The protein belongs to the NAD-dependent glycerol-3-phosphate dehydrogenase family.

It is found in the cytoplasm. The catalysed reaction is sn-glycerol 3-phosphate + NAD(+) = dihydroxyacetone phosphate + NADH + H(+). It catalyses the reaction sn-glycerol 3-phosphate + NADP(+) = dihydroxyacetone phosphate + NADPH + H(+). Its pathway is membrane lipid metabolism; glycerophospholipid metabolism. In terms of biological role, catalyzes the reduction of the glycolytic intermediate dihydroxyacetone phosphate (DHAP) to sn-glycerol 3-phosphate (G3P), the key precursor for phospholipid synthesis. The sequence is that of Glycerol-3-phosphate dehydrogenase [NAD(P)+] from Chlamydia felis (strain Fe/C-56) (Chlamydophila felis).